Here is a 418-residue protein sequence, read N- to C-terminus: Gamma-glutamyl phosphate reductase (418 aa).

It belongs to the gamma-glutamyl phosphate reductase family.

It is found in the cytoplasm. The enzyme catalyses L-glutamate 5-semialdehyde + phosphate + NADP(+) = L-glutamyl 5-phosphate + NADPH + H(+). It participates in amino-acid biosynthesis; L-proline biosynthesis; L-glutamate 5-semialdehyde from L-glutamate: step 2/2. In terms of biological role, catalyzes the NADPH-dependent reduction of L-glutamate 5-phosphate into L-glutamate 5-semialdehyde and phosphate. The product spontaneously undergoes cyclization to form 1-pyrroline-5-carboxylate. This is Gamma-glutamyl phosphate reductase from Pelobacter propionicus (strain DSM 2379 / NBRC 103807 / OttBd1).